Reading from the N-terminus, the 109-residue chain is Aquaporin-2 (109 aa).

Residues 1-6 (SIAFSR) lie on the Cytoplasmic side of the membrane. The chain crosses the membrane as a helical span at residues 7–27 (AVFSEFLATLLFVFFGLGSAL). At 28 to 35 (NWPQALPS) the chain is on the extracellular side. A helical transmembrane segment spans residues 36-54 (VLQIAMAFGLAIGTLVQAL). Topologically, residues 55 to 59 (GHISG) are cytoplasmic. Residues 60–69 (AHINPAVTVA) constitute an intramembrane region (discontinuously helical). Residues 63-65 (NPA) carry the NPA 1 motif. The Cytoplasmic portion of the chain corresponds to 70–80 (CLVGCHVSFLR). The helical transmembrane segment at 81–102 (ATFYLAAQLLGAVAGAAILHEI) threads the bilayer. Residues 103–109 (TPPDIRG) are Extracellular-facing.

Belongs to the MIP/aquaporin (TC 1.A.8) family. In terms of assembly, homotetramer. In terms of processing, serine phosphorylation is necessary and sufficient for expression at the apical membrane. Endocytosis is not phosphorylation-dependent. N-glycosylated.

The protein localises to the apical cell membrane. It localises to the basolateral cell membrane. Its subcellular location is the cell membrane. It is found in the cytoplasmic vesicle membrane. The protein resides in the golgi apparatus. The protein localises to the trans-Golgi network membrane. It catalyses the reaction H2O(in) = H2O(out). It carries out the reaction glycerol(in) = glycerol(out). Functionally, forms a water-specific channel that provides the plasma membranes of renal collecting duct with high permeability to water, thereby permitting water to move in the direction of an osmotic gradient. Plays an essential role in renal water homeostasis. Could also be permeable to glycerol. In Dugong dugon (Dugong), this protein is Aquaporin-2.